Consider the following 111-residue polypeptide: uncharacterized protein (111 aa).

Transmembrane regions (helical) follow at residues 4–23 (LHQV…LGHV), 39–61 (IYLG…VLSA), and 65–84 (SGIQ…EAVL).

The protein localises to the cell membrane. This is an uncharacterized protein from Bacillus subtilis (strain 168).